The following is a 394-amino-acid chain: Probable malate--CoA ligase subunit beta (394 aa).

An ATP-grasp domain is found at lysine 9–phenylalanine 244. ATP contacts are provided by lysine 46, glutamate 99, valine 102, and glutamate 107. Residues asparagine 199 and aspartate 213 each coordinate Mg(2+).

The protein belongs to the succinate/malate CoA ligase beta subunit family. In terms of assembly, heterotetramer of two alpha and two beta subunits. Mg(2+) is required as a cofactor.

It carries out the reaction (S)-malate + ATP + CoA = (S)-malyl-CoA + ADP + phosphate. Its pathway is one-carbon metabolism; formaldehyde assimilation via serine pathway. The polypeptide is Probable malate--CoA ligase subunit beta (mtkA) (Mesorhizobium japonicum (strain LMG 29417 / CECT 9101 / MAFF 303099) (Mesorhizobium loti (strain MAFF 303099))).